Here is a 122-residue protein sequence, read N- to C-terminus: UPF0145 protein BamMC406_5002 (122 aa).

The protein belongs to the UPF0145 family.

In Burkholderia ambifaria (strain MC40-6), this protein is UPF0145 protein BamMC406_5002.